Here is a 443-residue protein sequence, read N- to C-terminus: MDKGAPPSIFVNDGSFMERFRQLQQEKDKDKDKVVQVEDSKPVKIISNPKPAANKISIGLKPNDAQKKGGKLAFSLKQKSKLLAPPVKLGTEEDEDDEDVKHEQGFGSVKRQKLEQRDTPVKSAKVSDVAPPPPSDPTVKKVADKLASFVAKHGRPFEHITRQKNPGDTPFKFLFDENCADYKYYVFRLAEEEKLISQTKDSGVLHSGDAGSRTSTAAIPLQKPAYQQTGYQIPASALYDTPVEPGASSRSAQASITRPSDSDSFSGPRGADPLSMMEFYMKKAAQEEKMRRPRQSKDEMPPPASLQGPSETSSTDPGKRGHHMGDYIPLEELDKFLSKCNDAAAQKATKEAAEKAKIQADNVGHKLLSKMGWKEGEGIGSSRKGMADPIMAGDVKTNNLGVGASAPGEVKPEDDIYEQYKKRMMLGYKHRPNPLGNPRKAYY.

Disordered regions lie at residues isoleucine 45–lysine 71 and leucine 83–lysine 141. The stretch at valine 142–tyrosine 185 is one SURP motif repeat. Disordered stretches follow at residues glutamine 198–leucine 221, threonine 241–aspartate 272, and alanine 285–glycine 325. Polar residues predominate over residues serine 248–phenylalanine 265. A compositionally biased stretch (basic and acidic residues) spans alanine 285–methionine 300. Polar residues predominate over residues glutamine 307–aspartate 316. Residues alanine 360–proline 407 enclose the G-patch domain.

The protein resides in the nucleus. This Arabidopsis thaliana (Mouse-ear cress) protein is SURP and G-patch domain-containing protein 1-like protein.